A 262-amino-acid polypeptide reads, in one-letter code: Small ribosomal subunit protein eS1 (262 aa).

A compositionally biased stretch (basic and acidic residues) spans 235–253 (HGDGKGSDEPGAKVSRPEA). The tract at residues 235-262 (HGDGKGSDEPGAKVSRPEAYEPPVQESV) is disordered.

This sequence belongs to the eukaryotic ribosomal protein eS1 family. As to quaternary structure, component of the small ribosomal subunit. Mature ribosomes consist of a small (40S) and a large (60S) subunit. The 40S subunit contains about 33 different proteins and 1 molecule of RNA (18S). The 60S subunit contains about 49 different proteins and 3 molecules of RNA (28S, 5.8S and 5S).

It is found in the cytoplasm. The polypeptide is Small ribosomal subunit protein eS1 (Triatoma infestans (Assassin bug)).